We begin with the raw amino-acid sequence, 272 residues long: Ethanolamine ammonia-lyase small subunit (272 aa).

Residues V161, E182, and C211 each coordinate adenosylcob(III)alamin.

Belongs to the EutC family. As to quaternary structure, the basic unit is a heterodimer which dimerizes to form tetramers. The heterotetramers trimerize; 6 large subunits form a core ring with 6 small subunits projecting outwards. The cofactor is adenosylcob(III)alamin.

The protein localises to the bacterial microcompartment. The catalysed reaction is ethanolamine = acetaldehyde + NH4(+). Its pathway is amine and polyamine degradation; ethanolamine degradation. Catalyzes the deamination of various vicinal amino-alcohols to oxo compounds. Allows this organism to utilize ethanolamine as the sole source of nitrogen and carbon in the presence of external vitamin B12. The chain is Ethanolamine ammonia-lyase small subunit from Pseudomonas putida (strain GB-1).